A 130-amino-acid polypeptide reads, in one-letter code: Small ribosomal subunit protein uS8 (130 aa).

The protein belongs to the universal ribosomal protein uS8 family. As to quaternary structure, part of the 30S ribosomal subunit. Contacts proteins S5 and S12.

In terms of biological role, one of the primary rRNA binding proteins, it binds directly to 16S rRNA central domain where it helps coordinate assembly of the platform of the 30S subunit. This is Small ribosomal subunit protein uS8 from Cytophaga hutchinsonii (strain ATCC 33406 / DSM 1761 / CIP 103989 / NBRC 15051 / NCIMB 9469 / D465).